The primary structure comprises 542 residues: CTP synthase (542 aa).

Residues 1-265 (MARYIFITGG…DQEVLAAFGI (265 aa)) are amidoligase domain. Ser13 contributes to the CTP binding site. Ser13 serves as a coordination point for UTP. 14–19 (SLGKGL) is a binding site for ATP. Position 54 (Tyr54) interacts with L-glutamine. ATP is bound at residue Asp71. Residues Asp71 and Glu139 each coordinate Mg(2+). Residues 146–148 (DIE), 186–191 (KTKPTQ), and Lys222 contribute to the CTP site. Residues 186 to 191 (KTKPTQ) and Lys222 contribute to the UTP site. An ATP-binding site is contributed by 238–240 (RDV). The 251-residue stretch at 291–541 (TIAIVGKYTG…IAAALEQSRL (251 aa)) folds into the Glutamine amidotransferase type-1 domain. Position 353 (Gly353) interacts with L-glutamine. The Nucleophile; for glutamine hydrolysis role is filled by Cys380. Residues 381 to 384 (FGMQ), Glu404, and Arg469 contribute to the L-glutamine site. Residues His514 and Glu516 contribute to the active site.

Belongs to the CTP synthase family. In terms of assembly, homotetramer.

The catalysed reaction is UTP + L-glutamine + ATP + H2O = CTP + L-glutamate + ADP + phosphate + 2 H(+). The enzyme catalyses L-glutamine + H2O = L-glutamate + NH4(+). It catalyses the reaction UTP + NH4(+) + ATP = CTP + ADP + phosphate + 2 H(+). Its pathway is pyrimidine metabolism; CTP biosynthesis via de novo pathway; CTP from UDP: step 2/2. With respect to regulation, allosterically activated by GTP, when glutamine is the substrate; GTP has no effect on the reaction when ammonia is the substrate. The allosteric effector GTP functions by stabilizing the protein conformation that binds the tetrahedral intermediate(s) formed during glutamine hydrolysis. Inhibited by the product CTP, via allosteric rather than competitive inhibition. Catalyzes the ATP-dependent amination of UTP to CTP with either L-glutamine or ammonia as the source of nitrogen. Regulates intracellular CTP levels through interactions with the four ribonucleotide triphosphates. This is CTP synthase from Methylocella silvestris (strain DSM 15510 / CIP 108128 / LMG 27833 / NCIMB 13906 / BL2).